Here is a 1614-residue protein sequence, read N- to C-terminus: Chitin synthase csmA (1614 aa).

The tract at residues 1–22 (MAGPAPSGRTPSHAQSSLPSLP) is disordered. The Myosin motor domain maps to 1-788 (MAGPAPSGRT…CWADLAKLGE (788 aa)). A compositionally biased stretch (polar residues) spans 9-19 (RTPSHAQSSLP). 105–112 (GESGSGKT) contributes to the ATP binding site. Residues 600 to 650 (QVSSKPMRMPSMARRKAGPSRLAFDAPEGDDQDEYDSQAGSMSKSSARRKS) are disordered. Acidic residues predominate over residues 626-635 (PEGDDQDEYD). The tract at residues 668-692 (LDIVSKCLNSANLNPYFVFCLKPND) is actin-binding. The next 2 membrane-spanning stretches (helical) occupy residues 898–918 (WMAIVYLLTFYIPDFLIKTFG) and 937–957 (LIIWFSCAFAIFFIVAFPGLI). The 60-residue stretch at 961–1020 (QHVYSTAELSSHNGKDGHNSFVAIRGIVFNLDKFMPSHYPDIVPEKSLKKYAGTDATGLF) folds into the Cytochrome b5 heme-binding domain. Residues asparagine 1047 and asparagine 1072 are each glycosylated (N-linked (GlcNAc...) asparagine). The helical transmembrane segment at 1209-1229 (FILAISIFICLIVVFKFLAAL) threads the bilayer. An N-linked (GlcNAc...) asparagine glycan is attached at asparagine 1572.

The protein in the N-terminal section; belongs to the TRAFAC class myosin-kinesin ATPase superfamily. Myosin family. In the C-terminal section; belongs to the chitin synthase family. Class V subfamily.

The protein resides in the cell membrane. It localises to the cell septum. The protein localises to the cell tip. The catalysed reaction is [(1-&gt;4)-N-acetyl-beta-D-glucosaminyl](n) + UDP-N-acetyl-alpha-D-glucosamine = [(1-&gt;4)-N-acetyl-beta-D-glucosaminyl](n+1) + UDP + H(+). In terms of biological role, polymerizes chitin, a structural polymer of the cell wall and septum, by transferring the sugar moiety of UDP-GlcNAc to the non-reducing end of the growing chitin polymer. Acts as the major chitin synthase in Aspergillus niger involved in cell wall integrity which is principally responsible for chitin synthesis at the lateral cell wall. Plays an important role in septal growth or maintenance. Mediates colony spore formation. This Aspergillus niger (strain ATCC MYA-4892 / CBS 513.88 / FGSC A1513) protein is Chitin synthase csmA.